The chain runs to 547 residues: Chaperonin GroEL (547 aa).

ATP is bound by residues 30 to 33 (TLGP), lysine 51, 87 to 91 (DGTTT), glycine 415, and aspartate 496.

Belongs to the chaperonin (HSP60) family. In terms of assembly, forms a cylinder of 14 subunits composed of two heptameric rings stacked back-to-back. Interacts with the co-chaperonin GroES.

The protein localises to the cytoplasm. It carries out the reaction ATP + H2O + a folded polypeptide = ADP + phosphate + an unfolded polypeptide.. Its function is as follows. Together with its co-chaperonin GroES, plays an essential role in assisting protein folding. The GroEL-GroES system forms a nano-cage that allows encapsulation of the non-native substrate proteins and provides a physical environment optimized to promote and accelerate protein folding. The polypeptide is Chaperonin GroEL (Pelodictyon phaeoclathratiforme (strain DSM 5477 / BU-1)).